Here is a 308-residue protein sequence, read N- to C-terminus: Energy-coupling factor transporter ATP-binding protein EcfA2 (308 aa).

The region spanning 3–263 is the ABC transporter domain; the sequence is IEVKNISKVF…VDFLRENEME (261 aa). Residue 40–47 coordinates ATP; that stretch reads GPTGSGKT.

The protein belongs to the ABC transporter superfamily. Energy-coupling factor EcfA family. As to quaternary structure, forms a stable energy-coupling factor (ECF) transporter complex composed of 2 membrane-embedded substrate-binding proteins (S component), 2 ATP-binding proteins (A component) and 2 transmembrane proteins (T component).

It localises to the cell membrane. In terms of biological role, ATP-binding (A) component of a common energy-coupling factor (ECF) ABC-transporter complex. Unlike classic ABC transporters this ECF transporter provides the energy necessary to transport a number of different substrates. The polypeptide is Energy-coupling factor transporter ATP-binding protein EcfA2 (Mycoplasma mobile (strain ATCC 43663 / 163K / NCTC 11711) (Mesomycoplasma mobile)).